A 266-amino-acid polypeptide reads, in one-letter code: Mitochondrial S-adenosylmethionine carrier protein (266 aa).

Solcar repeat units lie at residues 4–77 (RELC…AKRF), 85–167 (LSPI…LKNL), and 176–264 (VDCW…VRSS). The next 6 helical transmembrane spans lie at 5-25 (ELCA…LILF), 49-69 (IYAG…AFFV), 84-104 (YLSP…ACLI), 141-161 (RGYK…FPLW), 181-201 (SAVC…PLDV), and 237-257 (FAGV…FLGA).

The protein belongs to the mitochondrial carrier (TC 2.A.29) family.

It is found in the mitochondrion inner membrane. It carries out the reaction S-adenosyl-L-homocysteine(out) + S-adenosyl-L-methionine(in) = S-adenosyl-L-homocysteine(in) + S-adenosyl-L-methionine(out). Mitochondrial S-adenosyl-L-methionine/S-adenosyl-L-homocysteine antiporter. Mediates the exchange of cytosolic S-adenosyl-L-methionine, the predominant methyl-group donor for macromolecule methylation processes, for mitochondrial S-adenosylhomocysteine(SAH), a by-product of methylation reactions. This is Mitochondrial S-adenosylmethionine carrier protein (slc25a26) from Xenopus laevis (African clawed frog).